The primary structure comprises 568 residues: Kelch-like protein 12 (568 aa).

Positions 33 to 100 (CDVTLRVEQK…VYTETVHVTV (68 aa)) constitute a BTB domain. In terms of domain architecture, BACK spans 135-236 (CLGIRDFAET…LTPRYITDVI (102 aa)). 6 Kelch repeats span residues 282-329 (VLLV…SLHD), 331-379 (IYVI…TLGD), 380-426 (MIYV…VASG), 427-473 (IIYC…LLND), 475-520 (IYVV…VLRG), and 522-567 (LYAI…VLRE). An interaction with DVL3 region spans residues 405 to 568 (QWSMLGDMQT…DAGVCVLREK (164 aa)).

Component of the BCR(KLHL12) E3 ubiquitin ligase complex, at least composed of CUL3 and KLHL12 and RBX1. This complex interacts with DVL3 upon activation of the Wnt signaling pathway by WNT3A. Interacts with DRD4, KLHL2 and SEC31A. Interacts with PEF1 and PDCD6/ALG-2; interaction takes place in response to cytosolic calcium increase and leads to bridge together the BCR(KLHL12) complex and SEC31 (SEC31A or SEC31B). Ubiquitinated by the SCF(FBXL17) complex, leading to its degradation by the proteasome: ubiquitination by the SCF(FBXL17) complex takes place when aberrant BTB domain dimers are formed.

It localises to the cytoplasmic vesicle. The protein resides in the COPII-coated vesicle. Its pathway is protein modification; protein ubiquitination. Its function is as follows. Substrate-specific adapter of a BCR (BTB-CUL3-RBX1) E3 ubiquitin ligase complex that acts as a negative regulator of Wnt signaling pathway and ER-Golgi transport. The BCR(KLHL12) complex is involved in ER-Golgi transport by regulating the size of COPII coats, thereby playing a key role in collagen export, which is required for embryonic stem (ES) cells division: BCR(KLHL12) acts by mediating monoubiquitination of SEC31 (SEC31A or SEC31B). The BCR(KLHL12) complex is also involved in neural crest specification: in response to cytosolic calcium increase, interacts with the heterodimer formed with PEF1 and PDCD6/ALG-2, leading to bridge together the BCR(KLHL12) complex and SEC31 (SEC31A or SEC31B), promoting monoubiquitination of SEC31 and subsequent collagen export. As part of the BCR(KLHL12) complex, also acts as a negative regulator of the Wnt signaling pathway by mediating ubiquitination and subsequent proteolysis of DVL3. The BCR(KLHL12) complex also mediates polyubiquitination of DRD4 and PEF1, without leading to degradation of these proteins. The chain is Kelch-like protein 12 (Klhl12) from Rattus norvegicus (Rat).